Consider the following 93-residue polypeptide: Small ribosomal subunit protein uS19c (93 aa).

This sequence belongs to the universal ribosomal protein uS19 family.

Its subcellular location is the plastid. It is found in the chloroplast. Its function is as follows. Protein S19 forms a complex with S13 that binds strongly to the 16S ribosomal RNA. This chain is Small ribosomal subunit protein uS19c, found in Oryza nivara (Indian wild rice).